We begin with the raw amino-acid sequence, 459 residues long: Aluminum-activated malate transporter 1 (459 aa).

Topologically, residues 1–52 (MDIDHGRESDGEMVGTIASCGLLLHSLLAGLGRRAAGFARKVGGAAREDPRR) are extracellular. The next 2 helical transmembrane spans lie at 53–73 (VAHS…YFVT) and 74–94 (PLFN…VVVM). The Extracellular portion of the chain corresponds to 95–108 (EYTVGATLSKGLNR). A helical transmembrane segment spans residues 109–129 (ALATLVAGCIAVGAHQLAELA). Over 130–137 (ERCGDQGE) the chain is Cytoplasmic. A helical transmembrane segment spans residues 138–158 (PIVLTVLVFFVASAATFLRFI). Residues 159 to 160 (PE) lie on the Extracellular side of the membrane. A helical transmembrane segment spans residues 161–181 (IKAKYDYGVTIFILTFGLVAV). Residues 182 to 199 (SSYRVEELIQLAHQRFYT) lie on the Cytoplasmic side of the membrane. The helical transmembrane segment at 200-220 (IAVGVFICLCTTVFLFPVWAG) threads the bilayer. Residues 221-459 (EDVHKLASGN…DEPLPDVVIL (239 aa)) lie on the Extracellular side of the membrane.

The protein belongs to the aromatic acid exporter (TC 2.A.85) family. Detected in root tips.

Its subcellular location is the cell membrane. Activated by external aluminum. The enhancement of malate transport is not due to alteration in the selectivity properties but is due to an increased anion permeability. Functionally, malate transporter critical for aluminum tolerance. Permeable to chloride, nitrate, sulfate and malate. This chain is Aluminum-activated malate transporter 1 (ALMT1), found in Triticum aestivum (Wheat).